A 67-amino-acid polypeptide reads, in one-letter code: Conotoxin TsMMSK-011 (67 aa).

An N-terminal signal peptide occupies residues 1–22 (MMSKLGVLLTICLLLFPLTVLP). Positions 23–50 (MDGDQPADLPALRTQDIATDQSPWFDPV) are excised as a propeptide. 3 cysteine pairs are disulfide-bonded: Cys53–Cys65, Cys54–Cys61, and Cys58–Cys64. Pro63 is modified (4-hydroxyproline).

This sequence belongs to the conotoxin M superfamily. Expressed by the venom duct.

It is found in the secreted. This is Conotoxin TsMMSK-011 from Conus tessulatus (Tessellate cone).